The primary structure comprises 497 residues: Galactose-1-phosphate uridylyltransferase (497 aa).

Belongs to the galactose-1-phosphate uridylyltransferase type 2 family.

Its subcellular location is the cytoplasm. The catalysed reaction is alpha-D-galactose 1-phosphate + UDP-alpha-D-glucose = alpha-D-glucose 1-phosphate + UDP-alpha-D-galactose. Its pathway is carbohydrate metabolism; galactose metabolism. This chain is Galactose-1-phosphate uridylyltransferase, found in Enterococcus faecalis (strain ATCC 700802 / V583).